The following is a 344-amino-acid chain: GTP 3',8-cyclase (344 aa).

Residues 19–244 form the Radical SAM core domain; sequence PFGRTISYLR…MDLAESTGGP (226 aa). Arg-28 serves as a coordination point for GTP. [4Fe-4S] cluster-binding residues include Cys-35 and Cys-39. Tyr-41 is an S-adenosyl-L-methionine binding site. Cys-42 contacts [4Fe-4S] cluster. Arg-77 serves as a coordination point for GTP. An S-adenosyl-L-methionine-binding site is contributed by Gly-81. Thr-111 contacts GTP. Residue Ser-135 coordinates S-adenosyl-L-methionine. Residue Lys-171 participates in GTP binding. Met-205 lines the S-adenosyl-L-methionine pocket. [4Fe-4S] cluster is bound by residues Cys-268 and Cys-271. Residue 273–275 coordinates GTP; it reads RVR. A [4Fe-4S] cluster-binding site is contributed by Cys-285.

This sequence belongs to the radical SAM superfamily. MoaA family. Monomer and homodimer. It depends on [4Fe-4S] cluster as a cofactor.

The catalysed reaction is GTP + AH2 + S-adenosyl-L-methionine = (8S)-3',8-cyclo-7,8-dihydroguanosine 5'-triphosphate + 5'-deoxyadenosine + L-methionine + A + H(+). Its pathway is cofactor biosynthesis; molybdopterin biosynthesis. Catalyzes the cyclization of GTP to (8S)-3',8-cyclo-7,8-dihydroguanosine 5'-triphosphate. The sequence is that of GTP 3',8-cyclase from Bradyrhizobium diazoefficiens (strain JCM 10833 / BCRC 13528 / IAM 13628 / NBRC 14792 / USDA 110).